The primary structure comprises 74 residues: Toxin BmKaTx17 (74 aa).

The first 8 residues, 1–8, serve as a signal peptide directing secretion; that stretch reads LLMTGVES. The 63-residue stretch at 10–72 folds into the LCN-type CS-alpha/beta domain; it reads RDAYIAKNYN…KPIRIPGKCH (63 aa). 4 disulfides stabilise this stretch: cysteine 20–cysteine 71, cysteine 24–cysteine 44, cysteine 30–cysteine 54, and cysteine 34–cysteine 56. The propeptide at 73-74 is removed by a carboxypeptidase; the sequence is RR.

Belongs to the long (4 C-C) scorpion toxin superfamily. Sodium channel inhibitor family. Alpha subfamily. As to expression, expressed by the venom gland.

It localises to the secreted. Its function is as follows. Alpha toxins bind voltage-independently at site-3 of sodium channels (Nav) and inhibit the inactivation of the activated channels, thereby blocking neuronal transmission. The polypeptide is Toxin BmKaTx17 (Olivierus martensii (Manchurian scorpion)).